We begin with the raw amino-acid sequence, 80 residues long: Clavanin-A (80 aa).

An N-terminal signal peptide occupies residues M1–S19. Positions L20 to K29 are excised as a propeptide. F52 is subject to Phenylalanine amide. The propeptide occupies D54–Q80.

Its subcellular location is the secreted. Has antimicrobial activity. The chain is Clavanin-A from Styela clava (Sea squirt).